The primary structure comprises 198 residues: MERPTVVSGGTTTISIASVANGLPGRYATALYELAADRWLLNEVLPQAEALRGLIDGNADFRALLSDRTLDIKDITRALLAVLDAQGFGATIRHFVGVIARNRRLSQLPAILDALRAIAAAKRGEEVAEVVSAQPLTDLQRVQLQSRLAEAGYSRVNIQERVDAALLGGLVVRVGARLYDTSLRSRLTRLHHAMKGAA.

It belongs to the ATPase delta chain family. F-type ATPases have 2 components, F(1) - the catalytic core - and F(0) - the membrane proton channel. F(1) has five subunits: alpha(3), beta(3), gamma(1), delta(1), epsilon(1). F(0) has three main subunits: a(1), b(2) and c(10-14). The alpha and beta chains form an alternating ring which encloses part of the gamma chain. F(1) is attached to F(0) by a central stalk formed by the gamma and epsilon chains, while a peripheral stalk is formed by the delta and b chains.

It localises to the cell inner membrane. In terms of biological role, f(1)F(0) ATP synthase produces ATP from ADP in the presence of a proton or sodium gradient. F-type ATPases consist of two structural domains, F(1) containing the extramembraneous catalytic core and F(0) containing the membrane proton channel, linked together by a central stalk and a peripheral stalk. During catalysis, ATP synthesis in the catalytic domain of F(1) is coupled via a rotary mechanism of the central stalk subunits to proton translocation. Functionally, this protein is part of the stalk that links CF(0) to CF(1). It either transmits conformational changes from CF(0) to CF(1) or is implicated in proton conduction. In Gluconacetobacter diazotrophicus (strain ATCC 49037 / DSM 5601 / CCUG 37298 / CIP 103539 / LMG 7603 / PAl5), this protein is ATP synthase subunit delta.